Consider the following 117-residue polypeptide: Ig heavy chain V region 23 (117 aa).

An N-terminal signal peptide occupies residues 1–19; that stretch reads MGWSCIILFLVAAANGVHS. The interval 20 to 49 is framework-1; the sequence is QVQLQQPGTELVKPGASVKLSCKASGYTFT. The cysteines at positions 41 and 115 are disulfide-linked. The segment at 50–54 is complementarity-determining-1; that stretch reads SYWMH. A framework-2 region spans residues 55-68; the sequence is WVKQRPGQGLEWIG. The tract at residues 69 to 85 is complementarity-determining-2; that stretch reads NINPGNGGTNYNEKFKS. A framework-3 region spans residues 86–117; it reads KVTLTVDKSSSTAYTQLSSLTSEDSAVYYCAR.

The polypeptide is Ig heavy chain V region 23 (Mus musculus (Mouse)).